The chain runs to 148 residues: Nucleoside diphosphate kinase (148 aa).

ATP is bound by residues Lys9, Phe57, Arg85, Thr91, Arg102, and Asn112. A Phosphothreonine modification is found at Thr91. The active-site Pros-phosphohistidine intermediate is the His115. Ser122 is modified (phosphoserine).

Belongs to the NDK family. As to quaternary structure, homotetramer. It depends on Mg(2+) as a cofactor.

The protein localises to the cytoplasm. It catalyses the reaction a 2'-deoxyribonucleoside 5'-diphosphate + ATP = a 2'-deoxyribonucleoside 5'-triphosphate + ADP. It carries out the reaction a ribonucleoside 5'-diphosphate + ATP = a ribonucleoside 5'-triphosphate + ADP. Major role in the synthesis of nucleoside triphosphates other than ATP. The ATP gamma phosphate is transferred to the NDP beta phosphate via a ping-pong mechanism, using a phosphorylated active-site intermediate. The sequence is that of Nucleoside diphosphate kinase from Bacillus cereus (strain ATCC 10987 / NRS 248).